We begin with the raw amino-acid sequence, 67 residues long: MQVLVRDNNVDQALKALKKKMQREGIFREMKLRRHFEKPSERKAREAAEAVRRARKLERKRLEREGF.

Belongs to the bacterial ribosomal protein bS21 family.

The chain is Small ribosomal subunit protein bS21 from Granulibacter bethesdensis (strain ATCC BAA-1260 / CGDNIH1).